The primary structure comprises 364 residues: Guanine nucleotide-binding protein alpha-8 subunit (364 aa).

A lipid anchor (N-myristoyl glycine) is attached at glycine 2. Cysteine 5 is lipidated: S-palmitoyl cysteine. Residues 38 to 364 (KILKLLILGP…QHTMQKVGIQ (327 aa)) enclose the G-alpha domain. Residues 41–54 (KLLILGPGESGKST) are G1 motif. GTP-binding positions include 46–53 (GPGESGKS), 186–192 (LKSRVPT), 211–215 (DVGGQ), 280–283 (NKID), and alanine 336. Residues serine 53 and threonine 192 each contribute to the Mg(2+) site. The interval 184–192 (DILKSRVPT) is G2 motif. Positions 207–216 (FRIFDVGGQR) are G3 motif. The tract at residues 276-283 (ILFLNKID) is G4 motif. The segment at 334 to 339 (TCATDT) is G5 motif.

The protein belongs to the G-alpha family. In terms of assembly, g proteins are composed of 3 units; alpha, beta and gamma. The alpha chain contains the guanine nucleotide binding site.

Guanine nucleotide-binding proteins (G proteins) are involved as modulators or transducers in various transmembrane signaling systems. The protein is Guanine nucleotide-binding protein alpha-8 subunit (gpa-8) of Caenorhabditis elegans.